A 357-amino-acid polypeptide reads, in one-letter code: UPF0283 membrane protein BSUIS_A1077 (357 aa).

The segment at 1–36 (MSDKTPRKPTAFRLEQPARVSAASEQEEPRHPRAVK) is disordered. Residues 27–36 (EEPRHPRAVK) show a composition bias toward basic and acidic residues. 2 helical membrane-spanning segments follow: residues 78-98 (ILFGALGILVSFAIGIWTEDL) and 109-129 (LGWTALGVAMVALAAFAAIIL).

It belongs to the UPF0283 family.

It localises to the cell inner membrane. The chain is UPF0283 membrane protein BSUIS_A1077 from Brucella suis (strain ATCC 23445 / NCTC 10510).